The primary structure comprises 338 residues: tRNA N6-adenosine threonylcarbamoyltransferase (338 aa).

His110, His114, and Tyr131 together coordinate Fe cation. Residues 131–135 (YVSGG), Asp163, Asp184, and Asn268 contribute to the substrate site. Asp296 contributes to the Fe cation binding site.

This sequence belongs to the KAE1 / TsaD family. Fe(2+) serves as cofactor.

Its subcellular location is the cytoplasm. It carries out the reaction L-threonylcarbamoyladenylate + adenosine(37) in tRNA = N(6)-L-threonylcarbamoyladenosine(37) in tRNA + AMP + H(+). In terms of biological role, required for the formation of a threonylcarbamoyl group on adenosine at position 37 (t(6)A37) in tRNAs that read codons beginning with adenine. Is probably involved in the transfer of the threonylcarbamoyl moiety of threonylcarbamoyl-AMP (TC-AMP) to the N6 group of A37. The chain is tRNA N6-adenosine threonylcarbamoyltransferase from Staphylothermus marinus (strain ATCC 43588 / DSM 3639 / JCM 9404 / F1).